We begin with the raw amino-acid sequence, 466 residues long: Muscarinic acetylcholine receptor M2 (466 aa).

Topologically, residues 1–25 (MNNSTYINSSSENVIALESPYKTIE) are extracellular. N-linked (GlcNAc...) asparagine glycosylation is found at Asn-2, Asn-3, and Asn-8. The helical transmembrane segment at 26–48 (VVFIVLVAGSLSLVTIIGNILVM) threads the bilayer. At 49-62 (VSIKVNRHLQTVNN) the chain is on the cytoplasmic side. The chain crosses the membrane as a helical span at residues 63 to 83 (YFLFSLACADLIIGIFSMNLY). Topologically, residues 84-100 (TLYTVIGYWPLGPVVCD) are extracellular. Cys-99 and Cys-179 form a disulfide bridge. Residues 101-122 (LWLALDYVVSNASVMNLLIISF) form a helical membrane-spanning segment. Residues 123-125 (DRY) carry the Important for signaling motif. Topologically, residues 123–142 (DRYFCVTKPLTYPVKRTTKM) are cytoplasmic. The chain crosses the membrane as a helical span at residues 143 to 165 (AGMMIAAAWVLSFILWAPAILFW). At 166-187 (QFIVGGRTVPDKDCYIQFFSNP) the chain is on the extracellular side. The helical transmembrane segment at 188-212 (AVTFGTAIAAFYLPVIIMTVLYWQI) threads the bilayer. Residues 213-387 (SRASKSRIKK…PPSREKKVTR (175 aa)) lie on the Cytoplasmic side of the membrane. Disordered stretches follow at residues 223–265 (GKKE…KVQN) and 279–315 (QGEEKDSSNDSTSVSVVPSNTKEDEAAKDASQISASQ). Composition is skewed to polar residues over residues 228–238 (AQNQDPVSPSL) and 246–256 (PNNNNIPTSSD). Positions 287–298 (NDSTSVSVVPSN) are enriched in low complexity. The chain crosses the membrane as a helical span at residues 388 to 410 (TILAILLAFIITWTPYNVMVLIN). Over 411–418 (SFCASCIP) the chain is Extracellular. Cys-413 and Cys-416 are joined by a disulfide. Residues 419 to 442 (GTVWTIGYWLCYINSTINPACYAL) form a helical membrane-spanning segment. Positions 436–440 (NPACY) match the Important for signaling motif. Topologically, residues 443–466 (CNATFKKTFKHLLMCHYKNIGATR) are cytoplasmic. Residues Thr-446, Thr-450, and Thr-465 each carry the phosphothreonine modification.

Belongs to the G-protein coupled receptor 1 family. Muscarinic acetylcholine receptor subfamily. CHRM2 sub-subfamily.

It is found in the cell membrane. The protein localises to the postsynaptic cell membrane. Its function is as follows. The muscarinic acetylcholine receptor mediates various cellular responses, including inhibition of adenylate cyclase, breakdown of phosphoinositides and modulation of potassium channels through the action of G proteins. Primary transducing effect is adenylate cyclase inhibition. Signaling promotes phospholipase C activity, leading to the release of inositol trisphosphate (IP3); this then triggers calcium ion release into the cytosol. The protein is Muscarinic acetylcholine receptor M2 (CHRM2) of Gallus gallus (Chicken).